Here is a 110-residue protein sequence, read N- to C-terminus: UPF0060 membrane protein Nmul_A0351 (110 aa).

4 helical membrane-spanning segments follow: residues 7–27, 33–53, 63–83, and 87–107; these read LFLF…PYLW, SAWL…LLTL, AAYG…VDGV, and AWDM…MFGP.

It belongs to the UPF0060 family.

The protein localises to the cell inner membrane. The chain is UPF0060 membrane protein Nmul_A0351 from Nitrosospira multiformis (strain ATCC 25196 / NCIMB 11849 / C 71).